The primary structure comprises 297 residues: Phosphatidylserine decarboxylase proenzyme (297 aa).

Active-site charge relay system; for autoendoproteolytic cleavage activity residues include D100, H157, and S263. The Schiff-base intermediate with substrate; via pyruvic acid; for decarboxylase activity role is filled by S263. Position 263 is a pyruvic acid (Ser); by autocatalysis (S263).

Belongs to the phosphatidylserine decarboxylase family. PSD-B subfamily. Prokaryotic type I sub-subfamily. In terms of assembly, heterodimer of a large membrane-associated beta subunit and a small pyruvoyl-containing alpha subunit. Pyruvate is required as a cofactor. Post-translationally, is synthesized initially as an inactive proenzyme. Formation of the active enzyme involves a self-maturation process in which the active site pyruvoyl group is generated from an internal serine residue via an autocatalytic post-translational modification. Two non-identical subunits are generated from the proenzyme in this reaction, and the pyruvate is formed at the N-terminus of the alpha chain, which is derived from the carboxyl end of the proenzyme. The autoendoproteolytic cleavage occurs by a canonical serine protease mechanism, in which the side chain hydroxyl group of the serine supplies its oxygen atom to form the C-terminus of the beta chain, while the remainder of the serine residue undergoes an oxidative deamination to produce ammonia and the pyruvoyl prosthetic group on the alpha chain. During this reaction, the Ser that is part of the protease active site of the proenzyme becomes the pyruvoyl prosthetic group, which constitutes an essential element of the active site of the mature decarboxylase.

Its subcellular location is the cell membrane. The enzyme catalyses a 1,2-diacyl-sn-glycero-3-phospho-L-serine + H(+) = a 1,2-diacyl-sn-glycero-3-phosphoethanolamine + CO2. It functions in the pathway phospholipid metabolism; phosphatidylethanolamine biosynthesis; phosphatidylethanolamine from CDP-diacylglycerol: step 2/2. In terms of biological role, catalyzes the formation of phosphatidylethanolamine (PtdEtn) from phosphatidylserine (PtdSer). This chain is Phosphatidylserine decarboxylase proenzyme, found in Glaesserella parasuis serovar 5 (strain SH0165) (Haemophilus parasuis).